The sequence spans 80 residues: MAKFASIITFIYAALVLFAAFEVPTMVEAQKLCEKPSGTWSGVCGNSNACKNQCINLEGAKHGSCNYVFPAHKCICYVPC.

Positions 1–29 (MAKFASIITFIYAALVLFAAFEVPTMVEA) are cleaved as a signal peptide. The residue at position 30 (Gln-30) is a Pyrrolidone carboxylic acid. Cystine bridges form between Cys-33-Cys-80, Cys-44-Cys-65, Cys-50-Cys-74, and Cys-54-Cys-76.

Belongs to the DEFL family.

Its subcellular location is the secreted. In terms of biological role, confers broad-spectrum resistance to pathogens. This is Putative defensin-like protein 15 (PDF1.2B) from Arabidopsis thaliana (Mouse-ear cress).